The following is a 249-amino-acid chain: Pyridoxine 5'-phosphate synthase (249 aa).

3-amino-2-oxopropyl phosphate is bound at residue asparagine 7. Position 9–10 (9–10 (DH)) interacts with 1-deoxy-D-xylulose 5-phosphate. A 3-amino-2-oxopropyl phosphate-binding site is contributed by arginine 18. Histidine 43 serves as the catalytic Proton acceptor. Residues arginine 45 and histidine 50 each coordinate 1-deoxy-D-xylulose 5-phosphate. Glutamate 70 acts as the Proton acceptor in catalysis. Threonine 100 is a 1-deoxy-D-xylulose 5-phosphate binding site. Histidine 190 acts as the Proton donor in catalysis. Residues glycine 191 and 212–213 (GH) contribute to the 3-amino-2-oxopropyl phosphate site.

The protein belongs to the PNP synthase family. Homooctamer; tetramer of dimers.

The protein resides in the cytoplasm. It catalyses the reaction 3-amino-2-oxopropyl phosphate + 1-deoxy-D-xylulose 5-phosphate = pyridoxine 5'-phosphate + phosphate + 2 H2O + H(+). It participates in cofactor biosynthesis; pyridoxine 5'-phosphate biosynthesis; pyridoxine 5'-phosphate from D-erythrose 4-phosphate: step 5/5. Catalyzes the complicated ring closure reaction between the two acyclic compounds 1-deoxy-D-xylulose-5-phosphate (DXP) and 3-amino-2-oxopropyl phosphate (1-amino-acetone-3-phosphate or AAP) to form pyridoxine 5'-phosphate (PNP) and inorganic phosphate. The sequence is that of Pyridoxine 5'-phosphate synthase from Synechococcus sp. (strain CC9311).